The following is a 188-amino-acid chain: UPF0301 protein XOO1309 (188 aa).

It belongs to the UPF0301 (AlgH) family.

In Xanthomonas oryzae pv. oryzae (strain MAFF 311018), this protein is UPF0301 protein XOO1309.